We begin with the raw amino-acid sequence, 111 residues long: Cytochrome b-c1 complex subunit 7 (111 aa).

The residue at position 2 (A2) is an N-acetylalanine. K12 carries the post-translational modification N6-acetyllysine; alternate. Residue K12 is modified to N6-succinyllysine; alternate. Position 19 is an N6-acetyllysine (K19). Position 78 is an N6-acetyllysine; alternate (K78). K78 is subject to N6-succinyllysine; alternate. N6-acetyllysine is present on K83. K88 bears the N6-acetyllysine; alternate mark. An N6-succinyllysine; alternate modification is found at K88. Residue K96 is modified to N6-acetyllysine.

Belongs to the UQCRB/QCR7 family. In terms of assembly, component of the ubiquinol-cytochrome c oxidoreductase (cytochrome b-c1 complex, complex III, CIII), a multisubunit enzyme composed of 11 subunits. The complex is composed of 3 respiratory subunits cytochrome b, cytochrome c1 and Rieske protein UQCRFS1, 2 core protein subunits UQCRC1/QCR1 and UQCRC2/QCR2, and 6 low-molecular weight protein subunits UQCRH/QCR6, UQCRB/QCR7, UQCRQ/QCR8, UQCR10/QCR9, UQCR11/QCR10 and subunit 9, the cleavage product of Rieske protein UQCRFS1. The complex exists as an obligatory dimer and forms supercomplexes (SCs) in the inner mitochondrial membrane with NADH-ubiquinone oxidoreductase (complex I, CI) and cytochrome c oxidase (complex IV, CIV), resulting in different assemblies (supercomplex SCI(1)III(2)IV(1) and megacomplex MCI(2)III(2)IV(2)).

Its subcellular location is the mitochondrion inner membrane. In terms of biological role, component of the ubiquinol-cytochrome c oxidoreductase, a multisubunit transmembrane complex that is part of the mitochondrial electron transport chain which drives oxidative phosphorylation. The respiratory chain contains 3 multisubunit complexes succinate dehydrogenase (complex II, CII), ubiquinol-cytochrome c oxidoreductase (cytochrome b-c1 complex, complex III, CIII) and cytochrome c oxidase (complex IV, CIV), that cooperate to transfer electrons derived from NADH and succinate to molecular oxygen, creating an electrochemical gradient over the inner membrane that drives transmembrane transport and the ATP synthase. The cytochrome b-c1 complex catalyzes electron transfer from ubiquinol to cytochrome c, linking this redox reaction to translocation of protons across the mitochondrial inner membrane, with protons being carried across the membrane as hydrogens on the quinol. In the process called Q cycle, 2 protons are consumed from the matrix, 4 protons are released into the intermembrane space and 2 electrons are passed to cytochrome c. The chain is Cytochrome b-c1 complex subunit 7 (Uqcrb) from Mus musculus (Mouse).